Reading from the N-terminus, the 1009-residue chain is Glutamate receptor ionotropic, delta-1 (1009 aa).

An N-terminal signal peptide occupies residues 1–20 (MEALTLWLLPWICQCVSVRA). Residues 21 to 436 (DSIIHIGAIF…ERPMGSRLQG (416 aa)) are interaction with CBLN1. Residues 21 to 562 (DSIIHIGAIF…SIFSLFAPFD (542 aa)) lie on the Extracellular side of the membrane. Disulfide bonds link Cys80–Cys351, Cys96–Cys128, and Cys294–Cys306. Residues Asn131 and Asn200 are each glycosylated (N-linked (GlcNAc...) asparagine). Asn422 and Asn498 each carry an N-linked (GlcNAc...) asparagine glycan. The Ca(2+) site is built by Glu527, Val530, and Asp531. The helical transmembrane segment at 563–583 (FAVWACIAAAIPVVGVLIFVL) threads the bilayer. Over 584 to 637 (NRIQAVRAQSAAQPRPSASATLHSAIWIVYGAFVQQGGESSVNSMAMRIVMGSW) the chain is Cytoplasmic. A helical membrane pass occupies residues 638 to 658 (WLFTLIVCSSYTANLAAFLTV). Topologically, residues 659-830 (SRMDNPIRTF…ADGKSLKLHS (172 aa)) are extracellular. Positions 753, 755, and 757 each coordinate Ca(2+). Residues 831 to 851 (FAGVFCILAIGLLLACLVAAL) traverse the membrane as a helical segment. The Cytoplasmic segment spans residues 852-1009 (ELWWNSNRCH…ALDTSHGTSI (158 aa)). Polar residues predominate over residues 930–942 (FLPEQSSHGTSRT). Residues 930–954 (FLPEQSSHGTSRTLSSGPSSNLPLP) are disordered. Low complexity predominate over residues 943–954 (LSSGPSSNLPLP).

The protein belongs to the glutamate-gated ion channel (TC 1.A.10.1) family. GRID1 subfamily. As to quaternary structure, homodimer. Interacts (via extracellular N-terminal domain) with CBLN1 (via C1q domain), and more weakly with CBLN2; the interactions mediate the trans-synaptic adhesion complexes also with neurexins and are required for ligand-gated cation channel activity.

The protein resides in the postsynaptic cell membrane. The enzyme catalyses Ca(2+)(in) = Ca(2+)(out). It carries out the reaction Na(+)(in) = Na(+)(out). In terms of biological role, member of the ionotropic glutamate receptor family, which plays a crucial role in synaptic organization and signal transduction in the central nervous system. Although it shares structural features with ionotropic glutamate receptors, does not bind glutamate as a primary ligand. Instead, forms trans-synaptic adhesion complexes with presynaptic neurexins and cerebellins, regulating NMDA and AMPA receptor activity and influencing synaptic plasticity through signal transduction. In the presence of neurexins and cerebellins, forms cation-selective channels that are proposed to be gated by glycine and D-serine. However, recent research disputes this ligand-gated cation channel activity. Cation-selective ion channel can be triggered by GRM1 in dopaminergic neurons. Also acts as a receptor for GABA, modulating inhibitory synaptic plasticity through non-ionotropic mechanisms. The sequence is that of Glutamate receptor ionotropic, delta-1 from Homo sapiens (Human).